We begin with the raw amino-acid sequence, 462 residues long: Fumarate hydratase class II (462 aa).

Residues 97–99 (SGT), 127–130 (HPND), 137–139 (SSN), and T185 contribute to the substrate site. The active-site Proton donor/acceptor is the H186. S316 is an active-site residue. Substrate contacts are provided by residues S317 and 322–324 (KVN).

This sequence belongs to the class-II fumarase/aspartase family. Fumarase subfamily. Homotetramer.

Its subcellular location is the cytoplasm. The enzyme catalyses (S)-malate = fumarate + H2O. It functions in the pathway carbohydrate metabolism; tricarboxylic acid cycle; (S)-malate from fumarate: step 1/1. Involved in the TCA cycle. Catalyzes the stereospecific interconversion of fumarate to L-malate. The protein is Fumarate hydratase class II of Bacillus anthracis.